We begin with the raw amino-acid sequence, 225 residues long: NAD(P)H-quinone oxidoreductase subunit K, chloroplastic (225 aa).

4 residues coordinate [4Fe-4S] cluster: cysteine 43, cysteine 44, cysteine 108, and cysteine 139.

The protein belongs to the complex I 20 kDa subunit family. In terms of assembly, NDH is composed of at least 16 different subunits, 5 of which are encoded in the nucleus. It depends on [4Fe-4S] cluster as a cofactor.

Its subcellular location is the plastid. The protein resides in the chloroplast thylakoid membrane. It carries out the reaction a plastoquinone + NADH + (n+1) H(+)(in) = a plastoquinol + NAD(+) + n H(+)(out). The catalysed reaction is a plastoquinone + NADPH + (n+1) H(+)(in) = a plastoquinol + NADP(+) + n H(+)(out). Its function is as follows. NDH shuttles electrons from NAD(P)H:plastoquinone, via FMN and iron-sulfur (Fe-S) centers, to quinones in the photosynthetic chain and possibly in a chloroplast respiratory chain. The immediate electron acceptor for the enzyme in this species is believed to be plastoquinone. Couples the redox reaction to proton translocation, and thus conserves the redox energy in a proton gradient. This Nuphar advena (Common spatterdock) protein is NAD(P)H-quinone oxidoreductase subunit K, chloroplastic.